Here is a 611-residue protein sequence, read N- to C-terminus: Leucine aminopeptidase 2 (611 aa).

Residues 135 to 137 (QCQ) and 265 to 270 (PYGGME) contribute to the a peptide site. A Zn(2+)-binding site is contributed by His-294. Glu-295 serves as the catalytic Proton acceptor. Residues His-298 and Glu-317 each coordinate Zn(2+). Tyr-383 acts as the Proton donor in catalysis.

The protein belongs to the peptidase M1 family. Zn(2+) is required as a cofactor.

The protein resides in the cytoplasm. The protein localises to the nucleus. It catalyses the reaction an epoxide + H2O = an ethanediol. Its function is as follows. Aminopeptidase that preferentially cleaves di- and tripeptides. Also has low epoxide hydrolase activity (in vitro). Can hydrolyze the epoxide leukotriene LTA(4) but it forms preferentially 5,6-dihydroxy-7,9,11,14-eicosatetraenoic acid rather than the cytokine leukotriene B(4) as the product compared to the homologous mammalian enzyme (in vitro). The chain is Leucine aminopeptidase 2 from Chaetomium globosum (strain ATCC 6205 / CBS 148.51 / DSM 1962 / NBRC 6347 / NRRL 1970) (Soil fungus).